Consider the following 508-residue polypeptide: Mitochondrial distribution and morphology protein 10 (508 aa).

The interval 160–195 (PAHPTSTRPTPPQTPPSHTRQPSEPSTPAPSPTPGN) is disordered.

The protein belongs to the MDM10 family. Component of the ER-mitochondria encounter structure (ERMES) or MDM complex, composed of MMM1, MDM10, MDM12 and MDM34. Associates with the mitochondrial outer membrane sorting assembly machinery SAM(core) complex.

It localises to the mitochondrion outer membrane. Component of the ERMES/MDM complex, which serves as a molecular tether to connect the endoplasmic reticulum and mitochondria. Components of this complex are involved in the control of mitochondrial shape and protein biogenesis and may function in phospholipid exchange. MDM10 is involved in the late assembly steps of the general translocase of the mitochondrial outer membrane (TOM complex). Functions in the TOM40-specific route of the assembly of outer membrane beta-barrel proteins, including the association of TOM40 with the receptor TOM22 and small TOM proteins. Can associate with the SAM(core) complex as well as the MDM12-MMM1 complex, both involved in late steps of the major beta-barrel assembly pathway, that is responsible for biogenesis of all outer membrane beta-barrel proteins. May act as a switch that shuttles between both complexes and channels precursor proteins into the TOM40-specific pathway. Plays a role in mitochondrial morphology and in the inheritance of mitochondria. The chain is Mitochondrial distribution and morphology protein 10 from Cryptococcus neoformans var. neoformans serotype D (strain B-3501A) (Filobasidiella neoformans).